Here is a 62-residue protein sequence, read N- to C-terminus: uncharacterized protein (62 aa).

Residues 17–37 (IVFFLGLVVVLLMMINLYMLI) traverse the membrane as a helical segment.

The protein localises to the membrane. This is an uncharacterized protein from Helicobacter pylori (strain J99 / ATCC 700824) (Campylobacter pylori J99).